Consider the following 72-residue polypeptide: SRY-related protein AES2 (72 aa).

Positions 1 to 69 (VKRPMNAFMV…KHMADYPDYK (69 aa)) form a DNA-binding region, HMG box.

It localises to the nucleus. The chain is SRY-related protein AES2 from Alligator mississippiensis (American alligator).